The chain runs to 202 residues: D-alanyl-D-alanine dipeptidase (202 aa).

2 residues coordinate Zn(2+): His116 and Asp123. Glu181 (proton donor/acceptor) is an active-site residue. His184 provides a ligand contact to Zn(2+).

It belongs to the peptidase M15D family. In terms of assembly, homodimer. Zn(2+) serves as cofactor. Requires Fe(2+) as cofactor. It depends on Co(2+) as a cofactor. Ni(2+) is required as a cofactor.

It catalyses the reaction D-alanyl-D-alanine + H2O = 2 D-alanine. Inhibited by aminoalkyl phosphinate analogs. Its function is as follows. Catalyzes hydrolysis of the D-alanyl-D-alanine dipeptide. The polypeptide is D-alanyl-D-alanine dipeptidase (vanX) (Enterococcus faecium (Streptococcus faecium)).